The sequence spans 131 residues: UPF0102 protein YraN (131 aa).

It belongs to the UPF0102 family.

This Salmonella agona (strain SL483) protein is UPF0102 protein YraN.